The following is a 196-amino-acid chain: Molybdenum cofactor guanylyltransferase (196 aa).

GTP-binding positions include 10–12, Lys23, Asn51, Asp69, and Asp99; that span reads LAG. A Mg(2+)-binding site is contributed by Asp99.

It belongs to the MobA family. As to quaternary structure, monomer. It depends on Mg(2+) as a cofactor.

It localises to the cytoplasm. It catalyses the reaction Mo-molybdopterin + GTP + H(+) = Mo-molybdopterin guanine dinucleotide + diphosphate. Functionally, transfers a GMP moiety from GTP to Mo-molybdopterin (Mo-MPT) cofactor (Moco or molybdenum cofactor) to form Mo-molybdopterin guanine dinucleotide (Mo-MGD) cofactor. This chain is Molybdenum cofactor guanylyltransferase, found in Shewanella loihica (strain ATCC BAA-1088 / PV-4).